The chain runs to 220 residues: Flavin-dependent thymidylate synthase (220 aa).

The ThyX domain occupies 1 to 208; it reads MKIDILDKGF…PWTFEAFLKY (208 aa). FAD is bound by residues Thr-55, 78-80, and Glu-86; that span reads RHR. DUMP is bound by residues 75 to 78, 86 to 90, and Arg-147; these read QWFR and ELSGR. The short motif at 78–88 is the ThyX motif element; that stretch reads RHRIASYNELS. FAD-binding positions include 163-165 and Asn-169; that span reads NAR. Arg-174 serves as a coordination point for dUMP. The active-site Involved in ionization of N3 of dUMP, leading to its activation is Arg-174.

Belongs to the thymidylate synthase ThyX family. As to quaternary structure, homotetramer. The cofactor is FAD.

The enzyme catalyses dUMP + (6R)-5,10-methylene-5,6,7,8-tetrahydrofolate + NADPH + H(+) = dTMP + (6S)-5,6,7,8-tetrahydrofolate + NADP(+). It functions in the pathway pyrimidine metabolism; dTTP biosynthesis. Catalyzes the reductive methylation of 2'-deoxyuridine-5'-monophosphate (dUMP) to 2'-deoxythymidine-5'-monophosphate (dTMP) while utilizing 5,10-methylenetetrahydrofolate (mTHF) as the methyl donor, and NADPH and FADH(2) as the reductant. The protein is Flavin-dependent thymidylate synthase of Thermotoga sp. (strain RQ2).